We begin with the raw amino-acid sequence, 43 residues long: Defensin-A (43 aa).

Cystine bridges form between C3/C34, C20/C39, and C24/C41.

It localises to the secreted. Its function is as follows. Antibacterial protein. Strong activity against the Gram-positive bacteria M.luteus, B.megaterium and S.aureus. Reduced activity against Gram-positive bacterium B.subtilis and weak activity against Gram-negative bacterium X.japonicus. No detectable activity against the Gram-negative bacteria E.asbriae, E.coli, P.aeruginosa and S.marcescens. The polypeptide is Defensin-A (Anomala cuprea (Cupreous chafer beetle)).